A 252-amino-acid chain; its full sequence is Imidazole glycerol phosphate synthase subunit HisF (252 aa).

Residues Asp-11 and Asp-130 contribute to the active site.

Belongs to the HisA/HisF family. As to quaternary structure, heterodimer of HisH and HisF.

The protein resides in the cytoplasm. It catalyses the reaction 5-[(5-phospho-1-deoxy-D-ribulos-1-ylimino)methylamino]-1-(5-phospho-beta-D-ribosyl)imidazole-4-carboxamide + L-glutamine = D-erythro-1-(imidazol-4-yl)glycerol 3-phosphate + 5-amino-1-(5-phospho-beta-D-ribosyl)imidazole-4-carboxamide + L-glutamate + H(+). It participates in amino-acid biosynthesis; L-histidine biosynthesis; L-histidine from 5-phospho-alpha-D-ribose 1-diphosphate: step 5/9. IGPS catalyzes the conversion of PRFAR and glutamine to IGP, AICAR and glutamate. The HisF subunit catalyzes the cyclization activity that produces IGP and AICAR from PRFAR using the ammonia provided by the HisH subunit. The chain is Imidazole glycerol phosphate synthase subunit HisF from Desulforamulus reducens (strain ATCC BAA-1160 / DSM 100696 / MI-1) (Desulfotomaculum reducens).